The chain runs to 134 residues: Lymphocyte antigen 6I (134 aa).

Residues 1 to 21 (MDTSHAIKSCVLILLVTLLCA) form the signal peptide. In terms of domain architecture, UPAR/Ly6 spans 27–105 (LECYQCYGVP…ISCCQEDLCN (79 aa)). Cystine bridges form between cysteine 29-cysteine 53, cysteine 32-cysteine 41, cysteine 46-cysteine 74, cysteine 78-cysteine 98, and cysteine 99-cysteine 104. A glycan (N-linked (GlcNAc...) asparagine) is linked at asparagine 95. Glycine 112 carries GPI-anchor amidated glycine lipidation. Residues 113–134 (SSWTTAGVLLFSLGSVLLQTLM) constitute a propeptide, removed in mature form.

Expressed in hematopoietic tissue (spleen, thymus, bone marrow). Also found in peritoneal macrophages, peripheral blood leukocytes, liver, heart, brain, kidney and lung.

Its subcellular location is the cell membrane. The sequence is that of Lymphocyte antigen 6I (Ly6i) from Mus musculus (Mouse).